A 383-amino-acid chain; its full sequence is Lipid-A-disaccharide synthase (383 aa).

The protein belongs to the LpxB family.

The catalysed reaction is a lipid X + a UDP-2-N,3-O-bis[(3R)-3-hydroxyacyl]-alpha-D-glucosamine = a lipid A disaccharide + UDP + H(+). Its pathway is bacterial outer membrane biogenesis; LPS lipid A biosynthesis. Functionally, condensation of UDP-2,3-diacylglucosamine and 2,3-diacylglucosamine-1-phosphate to form lipid A disaccharide, a precursor of lipid A, a phosphorylated glycolipid that anchors the lipopolysaccharide to the outer membrane of the cell. The protein is Lipid-A-disaccharide synthase of Aliivibrio salmonicida (strain LFI1238) (Vibrio salmonicida (strain LFI1238)).